The primary structure comprises 811 residues: Elongation factor G, mitochondrial (811 aa).

A mitochondrion-targeting transit peptide spans 1 to 64 (MSAIARAAAR…FQQSFQRRWA (64 aa)). The tr-type G domain maps to 96–394 (RRQRNVGISA…GVCAYLPNPS (299 aa)). GTP contacts are provided by residues 105 to 112 (AHIDSGKT), 192 to 196 (DTPGH), and 246 to 249 (NKMD).

This sequence belongs to the TRAFAC class translation factor GTPase superfamily. Classic translation factor GTPase family. EF-G/EF-2 subfamily.

The protein localises to the mitochondrion. Its pathway is protein biosynthesis; polypeptide chain elongation. Mitochondrial GTPase that catalyzes the GTP-dependent ribosomal translocation step during translation elongation. During this step, the ribosome changes from the pre-translocational (PRE) to the post-translocational (POST) state as the newly formed A-site-bound peptidyl-tRNA and P-site-bound deacylated tRNA move to the P and E sites, respectively. Catalyzes the coordinated movement of the two tRNA molecules, the mRNA and conformational changes in the ribosome. In Cryptococcus neoformans var. neoformans serotype D (strain JEC21 / ATCC MYA-565) (Filobasidiella neoformans), this protein is Elongation factor G, mitochondrial.